A 510-amino-acid chain; its full sequence is GTPase Der (510 aa).

EngA-type G domains follow at residues 3–166 (PVVA…ATAL) and 220–393 (IKIA…ACAT). GTP-binding positions include 9–16 (GRPNVGKS), 56–60 (DTGGI), 118–121 (NKTD), 226–233 (GRPNVGKS), 273–277 (DTAGV), and 338–341 (NKWD). The region spanning 394 to 478 (QKTSTSMLTR…PIRIQFQEGN (85 aa)) is the KH-like domain.

It belongs to the TRAFAC class TrmE-Era-EngA-EngB-Septin-like GTPase superfamily. EngA (Der) GTPase family. In terms of assembly, associates with the 50S ribosomal subunit.

In terms of biological role, GTPase that plays an essential role in the late steps of ribosome biogenesis. The polypeptide is GTPase Der (Haemophilus ducreyi (strain 35000HP / ATCC 700724)).